A 128-amino-acid polypeptide reads, in one-letter code: MSFTTIFYIGFGGALGAILRSFTNGFVSKIFPNLSFPLGTLSVNIIGGFFIGFLMSLASNINIDINLKSFLVTGFLGGLTTFSTFSYENMLLLQSGNYTNAFLNIASNLLLSLLFCYFGFWIVKVMYA.

Transmembrane regions (helical) follow at residues F3–T23, L34–L54, I65–F85, and F102–I122. 2 residues coordinate Na(+): G77 and T80.

It belongs to the fluoride channel Fluc/FEX (TC 1.A.43) family.

It localises to the cell inner membrane. It carries out the reaction fluoride(in) = fluoride(out). Na(+) is not transported, but it plays an essential structural role and its presence is essential for fluoride channel function. Its function is as follows. Fluoride-specific ion channel. Important for reducing fluoride concentration in the cell, thus reducing its toxicity. The sequence is that of Fluoride-specific ion channel FluC from Campylobacter fetus subsp. fetus (strain 82-40).